The following is a 300-amino-acid chain: Ribosomal protein L11 methyltransferase (300 aa).

S-adenosyl-L-methionine is bound by residues T147, G168, D190, and N236.

This sequence belongs to the methyltransferase superfamily. PrmA family.

The protein localises to the cytoplasm. It catalyses the reaction L-lysyl-[protein] + 3 S-adenosyl-L-methionine = N(6),N(6),N(6)-trimethyl-L-lysyl-[protein] + 3 S-adenosyl-L-homocysteine + 3 H(+). Methylates ribosomal protein L11. This chain is Ribosomal protein L11 methyltransferase, found in Leptospira interrogans serogroup Icterohaemorrhagiae serovar Lai (strain 56601).